A 130-amino-acid chain; its full sequence is Small ribosomal subunit protein uS8 (130 aa).

It belongs to the universal ribosomal protein uS8 family. In terms of assembly, part of the 30S ribosomal subunit. Contacts proteins S5 and S12.

One of the primary rRNA binding proteins, it binds directly to 16S rRNA central domain where it helps coordinate assembly of the platform of the 30S subunit. This Ectopseudomonas mendocina (strain ymp) (Pseudomonas mendocina) protein is Small ribosomal subunit protein uS8.